Here is a 154-residue protein sequence, read N- to C-terminus: Myoglobin (154 aa).

The 147-residue stretch at 2–148 (GLSDGEWQLV…FRNDMAAKYK (147 aa)) folds into the Globin domain. Serine 4 bears the Phosphoserine mark. Histidine 65 contacts nitrite. An O2-binding site is contributed by histidine 65. At threonine 68 the chain carries Phosphothreonine. Histidine 94 is a heme b binding site.

The protein belongs to the globin family. As to quaternary structure, monomeric.

The protein localises to the cytoplasm. Its subcellular location is the sarcoplasm. The enzyme catalyses Fe(III)-heme b-[protein] + nitric oxide + H2O = Fe(II)-heme b-[protein] + nitrite + 2 H(+). It catalyses the reaction H2O2 + AH2 = A + 2 H2O. In terms of biological role, monomeric heme protein which primary function is to store oxygen and facilitate its diffusion within muscle tissues. Reversibly binds oxygen through a pentacoordinated heme iron and enables its timely and efficient release as needed during periods of heightened demand. Depending on the oxidative conditions of tissues and cells, and in addition to its ability to bind oxygen, it also has a nitrite reductase activity whereby it regulates the production of bioactive nitric oxide. Under stress conditions, like hypoxia and anoxia, it also protects cells against reactive oxygen species thanks to its pseudoperoxidase activity. The protein is Myoglobin (MB) of Didelphis virginiana (North American opossum).